The following is a 310-amino-acid chain: Acetaldehyde dehydrogenase 1 (310 aa).

12-15 provides a ligand contact to NAD(+); that stretch reads SGNI. Catalysis depends on Cys132, which acts as the Acyl-thioester intermediate. Residues 163–171 and Asn287 contribute to the NAD(+) site; that span reads SAGPGTRAN.

Belongs to the acetaldehyde dehydrogenase family.

The catalysed reaction is acetaldehyde + NAD(+) + CoA = acetyl-CoA + NADH + H(+). This chain is Acetaldehyde dehydrogenase 1, found in Pseudomonas putida (strain W619).